The chain runs to 350 residues: MFS transporter OpS2 (350 aa).

8 consecutive transmembrane segments (helical) span residues 3 to 23 (FLAGGASASVAAVGAGTVADL), 34 to 54 (GYFFLGPMLGPLVSPIIGGIL), 65 to 85 (WGAVVYGGLVWLSMIFLLPET), 141 to 161 (FMTCYYASISFACYYILNLAI), 174 to 194 (AIILGLLYIPSALGSIVASVV), 227 to 247 (MCENAWIPAFVFPAALLVFGW), 253 to 273 (IFWFAPIVVTFFFGLGNSLIF), and 312 to 332 (PLLGAIGTQWLFTGLAVICWA).

The protein belongs to the major facilitator superfamily.

Its subcellular location is the cell membrane. In terms of biological role, MFS transporter; part of the gene cluster that mediates the biosynthesis of the bibenzoquinone oosporein, a metabolite required for fungal virulence that acts by evading host immunity to facilitate fungal multiplication in insects. The function of this putative MFS transporter remains unclear since its deletion leads to increased oosporein production. The chain is MFS transporter OpS2 from Beauveria bassiana (strain ARSEF 2860) (White muscardine disease fungus).